Consider the following 335-residue polypeptide: MAKIIYDNETTFDALKDKTIAIMGYGSQGHAHARNLHESGLNVIVGLRKSSSSWAKAENDGLKVMTVAEAAKAADVIMILLPDENQASVYYSEIAPNLEAGNALAFAHGFNIHYNQIVPPKDVDVFMAAPKGPGHIVRRTYTEGIGVPALIAVYQDATGNAREIALSYVKGIGATRAGVYETTFREETETDLFGEQVDLCGGLSSLIKTAFETLVEAGYQPEMAYFETCHEVKLIVDLIYEGGLERMWHSVSNTAEYGGMTVGPRIINDESREAMREALKRIQNGEFAKEFVLEGMVNHPVLKAMERQEKEHQLEVVGKQIRANIPWLNREIDDD.

Residues 2–182 (AKIIYDNETT…GATRAGVYET (181 aa)) enclose the KARI N-terminal Rossmann domain. Residues 25–28 (YGSQ), Arg48, Ser51, Ser53, and 83–86 (DENQ) contribute to the NADP(+) site. His108 is an active-site residue. Gly134 is a binding site for NADP(+). The KARI C-terminal knotted domain maps to 183–328 (TFREETETDL…KQIRANIPWL (146 aa)). Positions 191, 195, 227, and 231 each coordinate Mg(2+). A substrate-binding site is contributed by Ser252.

Belongs to the ketol-acid reductoisomerase family. Mg(2+) serves as cofactor.

It catalyses the reaction (2R)-2,3-dihydroxy-3-methylbutanoate + NADP(+) = (2S)-2-acetolactate + NADPH + H(+). The catalysed reaction is (2R,3R)-2,3-dihydroxy-3-methylpentanoate + NADP(+) = (S)-2-ethyl-2-hydroxy-3-oxobutanoate + NADPH + H(+). It functions in the pathway amino-acid biosynthesis; L-isoleucine biosynthesis; L-isoleucine from 2-oxobutanoate: step 2/4. It participates in amino-acid biosynthesis; L-valine biosynthesis; L-valine from pyruvate: step 2/4. Involved in the biosynthesis of branched-chain amino acids (BCAA). Catalyzes an alkyl-migration followed by a ketol-acid reduction of (S)-2-acetolactate (S2AL) to yield (R)-2,3-dihydroxy-isovalerate. In the isomerase reaction, S2AL is rearranged via a Mg-dependent methyl migration to produce 3-hydroxy-3-methyl-2-ketobutyrate (HMKB). In the reductase reaction, this 2-ketoacid undergoes a metal-dependent reduction by NADPH to yield (R)-2,3-dihydroxy-isovalerate. The polypeptide is Ketol-acid reductoisomerase (NADP(+)) (Methanosarcina barkeri (strain Fusaro / DSM 804)).